We begin with the raw amino-acid sequence, 464 residues long: ATP synthase subunit beta (464 aa).

153–160 (GGAGVGKT) provides a ligand contact to ATP.

It belongs to the ATPase alpha/beta chains family. F-type ATPases have 2 components, CF(1) - the catalytic core - and CF(0) - the membrane proton channel. CF(1) has five subunits: alpha(3), beta(3), gamma(1), delta(1), epsilon(1). CF(0) has three main subunits: a(1), b(2) and c(9-12). The alpha and beta chains form an alternating ring which encloses part of the gamma chain. CF(1) is attached to CF(0) by a central stalk formed by the gamma and epsilon chains, while a peripheral stalk is formed by the delta and b chains.

Its subcellular location is the cell inner membrane. The catalysed reaction is ATP + H2O + 4 H(+)(in) = ADP + phosphate + 5 H(+)(out). In terms of biological role, produces ATP from ADP in the presence of a proton gradient across the membrane. The catalytic sites are hosted primarily by the beta subunits. This Burkholderia lata (strain ATCC 17760 / DSM 23089 / LMG 22485 / NCIMB 9086 / R18194 / 383) protein is ATP synthase subunit beta.